Consider the following 526-residue polypeptide: Lysine--tRNA ligase (526 aa).

Residues 30–38 (PSGYVHIGN) carry the 'HIGH' region motif. Zn(2+)-binding residues include Asp95, Cys99, His100, His106, Cys177, and Cys199. A 'KMSKS' region motif is present at residues 280-284 (KMSGS).

The protein belongs to the class-I aminoacyl-tRNA synthetase family. Requires Zn(2+) as cofactor.

The protein localises to the cytoplasm. It carries out the reaction tRNA(Lys) + L-lysine + ATP = L-lysyl-tRNA(Lys) + AMP + diphosphate. This is Lysine--tRNA ligase (lysS) from Thermococcus kodakarensis (strain ATCC BAA-918 / JCM 12380 / KOD1) (Pyrococcus kodakaraensis (strain KOD1)).